Here is a 398-residue protein sequence, read N- to C-terminus: Spermatogenesis associated 6-like protein (398 aa).

Residues 170–215 are disordered; it reads KLNGPANNRKKKPKEKNSDQLSKGTPFWGPSPQRLHLHRPTQRNPG. 2 positions are modified to phosphoserine: Ser-269 and Ser-272.

The protein belongs to the SPATA6 family.

In Rattus norvegicus (Rat), this protein is Spermatogenesis associated 6-like protein (Spata6l).